Reading from the N-terminus, the 311-residue chain is Malate dehydrogenase (311 aa).

Residues 7–13 (GAAGGIG) and Asp34 contribute to the NAD(+) site. Substrate contacts are provided by Arg81 and Arg87. NAD(+) contacts are provided by residues Asn94 and 117–119 (ITN). Residues Asn119 and Arg153 each contribute to the substrate site. His177 functions as the Proton acceptor in the catalytic mechanism. Residue Met227 participates in NAD(+) binding.

It belongs to the LDH/MDH superfamily. MDH type 1 family. In terms of assembly, homodimer.

The catalysed reaction is (S)-malate + NAD(+) = oxaloacetate + NADH + H(+). In terms of biological role, catalyzes the reversible oxidation of malate to oxaloacetate. This chain is Malate dehydrogenase, found in Histophilus somni (strain 2336) (Haemophilus somnus).